The chain runs to 267 residues: tRNA pseudouridine synthase A (267 aa).

The active-site Nucleophile is the Asp51. Tyr109 serves as a coordination point for substrate.

This sequence belongs to the tRNA pseudouridine synthase TruA family. In terms of assembly, homodimer.

It catalyses the reaction uridine(38/39/40) in tRNA = pseudouridine(38/39/40) in tRNA. In terms of biological role, formation of pseudouridine at positions 38, 39 and 40 in the anticodon stem and loop of transfer RNAs. In Staphylococcus aureus (strain MSSA476), this protein is tRNA pseudouridine synthase A.